A 255-amino-acid chain; its full sequence is CCAAT/enhancer-binding protein delta (255 aa).

3 disordered regions span residues 1 to 42, 91 to 121, and 138 to 206; these read MTCA…AAPA, GGPA…PGSL, and PAAQ…QEMQ. A Glycyl lysine isopeptide (Lys-Gly) (interchain with G-Cter in SUMO) cross-link involves residue Lys-107. The span at 141–161 shows a compositional bias: pro residues; sequence QPTPPASPDPPRRSPAPPAPG. Residues 163 to 187 are compositionally biased toward basic and acidic residues; sequence ARDKAAGKRGPDRGSPEYRQRRERN. The bZIP domain maps to 177–240; the sequence is SPEYRQRRER…AGLRRFFKQL (64 aa). The tract at residues 181–208 is basic motif; sequence RQRRERNNIAVRKSRDKAKRRNQEMQQK. The tract at residues 212-240 is leucine-zipper; the sequence is LSAENEKLQQRVEQLTRDLAGLRRFFKQL.

This sequence belongs to the bZIP family. C/EBP subfamily. Binds DNA as a homodimer and as a heterodimer. Can form stable heterodimers with CEBPA, CEBPB and CEBPE. Directly interacts with SPI1/PU.1; this interaction does not affect DNA-binding properties of each partner. Interacts with PRDM16.

The protein localises to the nucleus. In terms of biological role, transcription activator that recognizes two different DNA motifs: the CCAAT homology common to many promoters and the enhanced core homology common to many enhancers. Important transcription factor regulating the expression of genes involved in immune and inflammatory responses. Transcriptional activator that enhances IL6 transcription alone and as heterodimer with CEBPB. The polypeptide is CCAAT/enhancer-binding protein delta (CEBPD) (Ovis aries (Sheep)).